Reading from the N-terminus, the 472-residue chain is Tubulin gamma chain (472 aa).

Residue 142-148 (AGGTGSG) participates in GTP binding.

It belongs to the tubulin family.

It is found in the cytoplasm. Its subcellular location is the cytoskeleton. The protein resides in the microtubule organizing center. Its function is as follows. Tubulin is the major constituent of microtubules. The gamma chain is found at microtubule organizing centers (MTOC) such as the spindle poles, suggesting that it is involved in the minus-end nucleation of microtubule assembly. This is Tubulin gamma chain (TUBG) from Anemia phyllitidis (Fern).